A 238-amino-acid chain; its full sequence is Large ribosomal subunit protein uL1 (238 aa).

It belongs to the universal ribosomal protein uL1 family. Part of the 50S ribosomal subunit.

In terms of biological role, binds directly to 23S rRNA. The L1 stalk is quite mobile in the ribosome, and is involved in E site tRNA release. Functionally, protein L1 is also a translational repressor protein, it controls the translation of the L11 operon by binding to its mRNA. The chain is Large ribosomal subunit protein uL1 from Salinispora arenicola (strain CNS-205).